The chain runs to 434 residues: F-box/kelch-repeat protein At1g55270 (434 aa).

The region spanning 76 to 122 (PPLLPGLPDDLAVACLIRVPRAEHRKLRLVCKRWYRLASGNFFYSQR) is the F-box domain. 5 Kelch repeats span residues 129 to 178 (EEWV…VLSG), 180 to 227 (HLYL…VINN), 229 to 276 (LYVA…VYDK), 278 to 321 (WFLK…SLNG), and 325 to 371 (GLDC…LHNK).

The polypeptide is F-box/kelch-repeat protein At1g55270 (Arabidopsis thaliana (Mouse-ear cress)).